The following is a 256-amino-acid chain: 5-keto-4-deoxy-D-glucarate aldolase (256 aa).

Catalysis depends on His50, which acts as the Proton acceptor. Gln151 serves as a coordination point for substrate. Glu153 serves as a coordination point for Mg(2+). The substrate site is built by Ser178 and Asp179. A Mg(2+)-binding site is contributed by Asp179.

It belongs to the HpcH/HpaI aldolase family. KDGluc aldolase subfamily. Homohexamer; trimer of dimers. Mg(2+) is required as a cofactor.

The enzyme catalyses 5-dehydro-4-deoxy-D-glucarate = 2-hydroxy-3-oxopropanoate + pyruvate. The catalysed reaction is 2-dehydro-3-deoxy-D-glucarate = 2-hydroxy-3-oxopropanoate + pyruvate. Its pathway is carbohydrate acid metabolism; galactarate degradation; D-glycerate from galactarate: step 2/3. In terms of biological role, catalyzes the reversible retro-aldol cleavage of both 5-keto-4-deoxy-D-glucarate and 2-keto-3-deoxy-D-glucarate to pyruvate and tartronic semialdehyde. This Salmonella agona (strain SL483) protein is 5-keto-4-deoxy-D-glucarate aldolase.